A 389-amino-acid chain; its full sequence is S-adenosylmethionine synthase (389 aa).

H15 is a binding site for ATP. D17 contributes to the Mg(2+) binding site. Residue E43 participates in K(+) binding. The L-methionine site is built by E56 and Q99. The tract at residues 99–109 (QSPDIAQGVNE) is flexible loop. ATP is bound by residues 166 to 168 (DAK), 234 to 235 (RF), D243, 249 to 250 (RK), A266, and K270. Residue D243 participates in L-methionine binding. K274 contacts L-methionine.

Belongs to the AdoMet synthase family. Homotetramer; dimer of dimers. It depends on Mg(2+) as a cofactor. Requires K(+) as cofactor.

The protein localises to the cytoplasm. The catalysed reaction is L-methionine + ATP + H2O = S-adenosyl-L-methionine + phosphate + diphosphate. It functions in the pathway amino-acid biosynthesis; S-adenosyl-L-methionine biosynthesis; S-adenosyl-L-methionine from L-methionine: step 1/1. In terms of biological role, catalyzes the formation of S-adenosylmethionine (AdoMet) from methionine and ATP. The overall synthetic reaction is composed of two sequential steps, AdoMet formation and the subsequent tripolyphosphate hydrolysis which occurs prior to release of AdoMet from the enzyme. The sequence is that of S-adenosylmethionine synthase from Neisseria gonorrhoeae (strain ATCC 700825 / FA 1090).